We begin with the raw amino-acid sequence, 813 residues long: Protein tramtrack, alpha isoform (813 aa).

One can recognise a BTB domain in the interval 33–98 (TDVTLAVEGQ…MYRGEVSVDQ (66 aa)). Disordered regions lie at residues 118–148 (EVND…PQLQ), 171–324 (ANAG…GPSE), 356–428 (TTPA…MPKK), and 526–585 (AGLP…LDDQ). A compositionally biased stretch (low complexity) spans 125–145 (SPAAAAAGAGATGSESTATTP). Positions 176–187 (TPTLPVQPSLLS) are enriched in polar residues. Over residues 192–201 (PKRKRGRPRK) the composition is skewed to basic residues. 3 positions are modified to phosphoserine: Ser203, Ser205, and Ser206. The residue at position 209 (Thr209) is a Phosphothreonine. The segment covering 254 to 285 (HTDDLNESRDSLPSKRSKNSKDHRVVSHHEDN) has biased composition (basic and acidic residues). Polar residues-rich tracts occupy residues 302–324 (LFGS…GPSE), 356–369 (TTPA…TPTK), and 377–388 (ATGSNNSNSLLK). Over residues 560–578 (SGKKGAKRPIQRRRVRRKA) the composition is skewed to basic residues. C2H2-type zinc fingers lie at residues 610-638 (YRCT…FLYH) and 646-669 (FPCP…KMTH). Position 682 is a phosphoserine (Ser682).

As to quaternary structure, interacts with CoRest/CG33525, suggesting that it acts by recruiting a CoRest-containing corepressor complex. Interacts with phyl.

The protein resides in the nucleus. Functionally, binds to a number of sites in the transcriptional regulatory region of ftz. Isoform alpha is required to repress genes that promote the R7 cell fate. Probable repressor of the transcription of the segmentation genes ftz, eve, h, odd, run, and en. May bind to the region 5'-AGGG[CT]GG-3'. Degradation of ttk is directed by binding of sinah or sina, via the adapter molecule phyl which binds to the BTB domain of ttk. The sequence is that of Protein tramtrack, alpha isoform (ttk) from Drosophila melanogaster (Fruit fly).